We begin with the raw amino-acid sequence, 315 residues long: Ribosomal RNA small subunit methyltransferase H (315 aa).

S-adenosyl-L-methionine contacts are provided by residues 61–63 (GGH), Asp80, Phe108, Asp124, and Gln131. Residues 291–315 (PQPEEEEKNPRSRSAKLRFAQRKPL) are disordered. A compositionally biased stretch (basic residues) spans 301–315 (RSRSAKLRFAQRKPL).

It belongs to the methyltransferase superfamily. RsmH family.

It localises to the cytoplasm. The catalysed reaction is cytidine(1402) in 16S rRNA + S-adenosyl-L-methionine = N(4)-methylcytidine(1402) in 16S rRNA + S-adenosyl-L-homocysteine + H(+). Its function is as follows. Specifically methylates the N4 position of cytidine in position 1402 (C1402) of 16S rRNA. This chain is Ribosomal RNA small subunit methyltransferase H, found in Crocosphaera subtropica (strain ATCC 51142 / BH68) (Cyanothece sp. (strain ATCC 51142)).